We begin with the raw amino-acid sequence, 75 residues long: Brevinin-2SN2 (75 aa).

An N-terminal signal peptide occupies residues 1-22 (MFTMKKSLLFLFFLGTISLSFC). The propeptide at 23–40 (EEERGADEDDGGEMTEEE) is removed in mature form. A disulfide bridge links cysteine 69 with cysteine 75.

The protein belongs to the frog skin active peptide (FSAP) family. Brevinin subfamily. Expressed by the skin glands.

It localises to the secreted. Functionally, antimicrobial peptide. Active against some Gram-negative and a variety of Gram-positive bacterial strains. Active against fungus C.glabrata 090902 but not against C.albicans ATCC 10231. Shows hemolytic activity against human erythrocytes. The chain is Brevinin-2SN2 from Sylvirana spinulosa (Fine-spined frog).